The primary structure comprises 492 residues: N-succinylglutamate 5-semialdehyde dehydrogenase (492 aa).

220-225 (GRANTG) is a binding site for NAD(+). Active-site residues include E243 and C277.

Belongs to the aldehyde dehydrogenase family. AstD subfamily.

The enzyme catalyses N-succinyl-L-glutamate 5-semialdehyde + NAD(+) + H2O = N-succinyl-L-glutamate + NADH + 2 H(+). The protein operates within amino-acid degradation; L-arginine degradation via AST pathway; L-glutamate and succinate from L-arginine: step 4/5. Its function is as follows. Catalyzes the NAD-dependent reduction of succinylglutamate semialdehyde into succinylglutamate. The chain is N-succinylglutamate 5-semialdehyde dehydrogenase from Shigella boydii serotype 18 (strain CDC 3083-94 / BS512).